The chain runs to 160 residues: Adenosine 5'-monophosphoramidase HINT3 (160 aa).

Residues 24–132 (IFCTIAKGDD…LAPYSQLYKW (109 aa)) enclose the HIT domain. AMP-binding positions include 50-51 (DI) and 119-121 (HLH). The Histidine triad motif motif lies at 117–121 (HLHLH). The Tele-AMP-histidine intermediate role is filled by His119.

Belongs to the HINT family. In terms of assembly, forms dimers to octamers and even larger oligomer.

Its subcellular location is the cytoplasm. The protein localises to the nucleus. It carries out the reaction adenosine 5'-phosphoramidate + H2O = AMP + NH4(+). Exhibits adenosine 5'-monophosphoramidase activity, hydrolyzing purine nucleotide phosphoramidates with a single phosphate group such as adenosine 5'monophosphoramidate (AMP-NH2) to yield AMP and NH2. Hydrolyzes lysyl-AMP (AMP-N-epsilon-(N-alpha-acetyl lysine methyl ester)) generated by lysine tRNA ligase. The chain is Adenosine 5'-monophosphoramidase HINT3 (hint3) from Danio rerio (Zebrafish).